The primary structure comprises 331 residues: Mitochondrial glycine transporter (331 aa).

Solcar repeat units lie at residues 19 to 103 (SRTT…LRQG), 132 to 216 (LSNW…LKRR), and 234 to 318 (SSSS…LILR). The next 6 helical transmembrane spans lie at 25–50 (FAAGLCSGLTSSILLQPADLLKTRVQ), 78–104 (GTLPSALRTGFGSALYFTSLNALRQGL), 138–163 (LATGAVARTAAGFVMMPVTVLKVRYE), 191–214 (GFGATAARDAPYAGLYVLFYEQLK), 238–264 (INFVSGGLAAGLATAITNPFDAVKTRL), and 293–311 (GLGLRITRKALSSALAWTV).

It belongs to the mitochondrial carrier (TC 2.A.29) family. SLC25A38 subfamily.

Its subcellular location is the mitochondrion inner membrane. It carries out the reaction glycine(in) = glycine(out). Functionally, mitochondrial glycine transporter that imports glycine into the mitochondrial matrix. Plays an important role in providing glycine for the first enzymatic step in heme biosynthesis, the condensation of glycine with succinyl-CoA to produce 5-aminolevulinate (ALA) in the mitochondrial matrix. The protein is Mitochondrial glycine transporter of Neosartorya fischeri (strain ATCC 1020 / DSM 3700 / CBS 544.65 / FGSC A1164 / JCM 1740 / NRRL 181 / WB 181) (Aspergillus fischerianus).